A 356-amino-acid polypeptide reads, in one-letter code: Dual-specificity RNA methyltransferase RlmN (356 aa).

E89 functions as the Proton acceptor in the catalytic mechanism. The 234-residue stretch at 108–341 folds into the Radical SAM core domain; the sequence is SHARYTICVS…CTIRESKGLD (234 aa). C115 and C346 are joined by a disulfide. C122, C126, and C129 together coordinate [4Fe-4S] cluster. S-adenosyl-L-methionine-binding positions include 172 to 173, S204, 227 to 229, and N303; these read GE and SLH. C346 acts as the S-methylcysteine intermediate in catalysis.

The protein belongs to the radical SAM superfamily. RlmN family. Requires [4Fe-4S] cluster as cofactor.

The protein resides in the cytoplasm. It carries out the reaction adenosine(2503) in 23S rRNA + 2 reduced [2Fe-2S]-[ferredoxin] + 2 S-adenosyl-L-methionine = 2-methyladenosine(2503) in 23S rRNA + 5'-deoxyadenosine + L-methionine + 2 oxidized [2Fe-2S]-[ferredoxin] + S-adenosyl-L-homocysteine. It catalyses the reaction adenosine(37) in tRNA + 2 reduced [2Fe-2S]-[ferredoxin] + 2 S-adenosyl-L-methionine = 2-methyladenosine(37) in tRNA + 5'-deoxyadenosine + L-methionine + 2 oxidized [2Fe-2S]-[ferredoxin] + S-adenosyl-L-homocysteine. In terms of biological role, specifically methylates position 2 of adenine 2503 in 23S rRNA and position 2 of adenine 37 in tRNAs. m2A2503 modification seems to play a crucial role in the proofreading step occurring at the peptidyl transferase center and thus would serve to optimize ribosomal fidelity. The polypeptide is Dual-specificity RNA methyltransferase RlmN (Campylobacter jejuni subsp. jejuni serotype O:2 (strain ATCC 700819 / NCTC 11168)).